A 1131-amino-acid chain; its full sequence is Probable pre-mRNA-splicing factor ATP-dependent RNA helicase mog-1 (1131 aa).

Basic and acidic residues-rich tracts occupy residues 1–12 (MSDKRADGRLEG), 65–122 (RGVT…DRSG), 139–148 (WDQDDREGSS), 160–173 (RGER…DSER), 180–225 (RSER…WEEE), and 407–416 (GNYKESHQFA). 2 disordered regions span residues 1–225 (MSDK…WEEE) and 389–416 (MGVK…HQFA). The Helicase ATP-binding domain occupies 451–614 (MNVIRENNVV…FGGNCPTFTI (164 aa)). 464 to 471 (GETGSGKT) provides a ligand contact to ATP. The DEAH box signature appears at 561–564 (DEAH). A Helicase C-terminal domain is found at 629–812 (PVEDYVDAAV…NVVLLLKSLG (184 aa)). Composition is skewed to basic and acidic residues over residues 1085–1114 (EMRE…RRVV) and 1121–1131 (ARSERRKLWGL). The interval 1085–1131 (EMREAQKEMERRKEESDKAFKRPESSRRVVEVGSKSARSERRKLWGL) is disordered.

This sequence belongs to the DEAD box helicase family. DEAH subfamily. PRP16 sub-subfamily.

It localises to the nucleus. The catalysed reaction is ATP + H2O = ADP + phosphate + H(+). Functionally, probable ATP-binding RNA helicase involved in pre-mRNA splicing. This Caenorhabditis elegans protein is Probable pre-mRNA-splicing factor ATP-dependent RNA helicase mog-1 (mog-1).